The sequence spans 527 residues: UPF0053 protein YegH (527 aa).

A run of 5 helical transmembrane segments spans residues 14–34, 51–71, 81–101, 145–165, and 185–205; these read ITLI…IAIL, LLLA…LVTL, FTFS…LFKA, ITAV…VIAI, and IVIL…AEGF. 2 CBS domains span residues 306 to 366 and 371 to 429; these read MTSR…GEPL and LIRQ…PNEV.

This sequence belongs to the UPF0053 family.

Its subcellular location is the cell membrane. This is UPF0053 protein YegH (yegH) from Escherichia coli (strain K12).